A 263-amino-acid polypeptide reads, in one-letter code: Methylesterase 2 (263 aa).

S85 acts as the Acyl-ester intermediate in catalysis. Catalysis depends on charge relay system residues D213 and H241.

It belongs to the AB hydrolase superfamily. Methylesterase family.

The catalysed reaction is methyl (indol-3-yl)acetate + H2O = (indol-3-yl)acetate + methanol + H(+). The enzyme catalyses methyl (-)-jasmonate + H2O = jasmonate + methanol + H(+). It carries out the reaction methyl salicylate + H2O = salicylate + methanol + H(+). It functions in the pathway plant hormone biosynthesis. Its pathway is lipid metabolism; oxylipin biosynthesis. With respect to regulation, esterase activity is down-regulated by salicylic acid (SA). Down-regulated by agrochemicals Paraoxon, 3,4-DCl and Profenofos. Its function is as follows. Methylesterase shown to have carboxylesterase activity, methyl indole-3-acetic acid (MeIAA) esterase activity, methyl salicylate (MeSA) esterase activity and methyl jasmonate (MeJA) esterase activity in vitro. The chain is Methylesterase 2 from Arabidopsis thaliana (Mouse-ear cress).